The chain runs to 242 residues: Transcription factor bHLH100 (242 aa).

The 53-residue stretch at 61 to 113 (MKKLNHNASERERRKKINTMFSSLRSCLPPTNQTKKLSVSATVSQALKYIPEL) folds into the bHLH domain.

In terms of assembly, homodimer. As to expression, expressed constitutively in roots, leaves, and stems.

It localises to the nucleus. Functionally, plays a role in metal homeostasis. Confers tolerance to high zinc (Zn) and nickel (Ni). The chain is Transcription factor bHLH100 (BHLH100) from Arabidopsis thaliana (Mouse-ear cress).